The chain runs to 404 residues: MIVENIPDEFKKALPILEKIREAGFEAYFVGGSVRDTLLGLPIHDVDIASSAYPEEIKQIFSKTVDTGVEHGTVMVLDHGTGYEITTFRTESTYQDYRRPDKVEFVRSLEEDLKRRDLTINALAMDDKGKIIDLFDGLKDLKNGIIRAVGNPEERFHEDALRMMRAVRFGSQLDFKVELDTFNAIKKNSHLLEKIAIERIHVEWVKLLLGKNPKQGLQEFLDTELYKYCPLFADKYAELKSILEFSDFKLNTEEECWTLLSDVFKLKDTDISNLLRSWKSSNNIIKYVIAASLCVQKIKDSKLDIETYYQNGIEIILTANQIAKIRGFGMDDNELKNNYDKLPIKSRKEMKINGKDLVQEAGVKPGKIMGEILNKLEKEIVFGNIINDKEILIENAKKLLEEKV.

Residues glycine 32 and arginine 35 each coordinate ATP. CTP-binding residues include glycine 32 and arginine 35. Residues aspartate 45 and aspartate 47 each coordinate Mg(2+). Residues arginine 116, aspartate 159, arginine 162, arginine 165, and arginine 168 each coordinate ATP. CTP contacts are provided by arginine 116, aspartate 159, arginine 162, arginine 165, and arginine 168.

It belongs to the tRNA nucleotidyltransferase/poly(A) polymerase family. Bacterial CCA-adding enzyme type 3 subfamily. Homodimer. The cofactor is Mg(2+).

It catalyses the reaction a tRNA precursor + 2 CTP + ATP = a tRNA with a 3' CCA end + 3 diphosphate. It carries out the reaction a tRNA with a 3' CCA end + 2 CTP + ATP = a tRNA with a 3' CCACCA end + 3 diphosphate. In terms of biological role, catalyzes the addition and repair of the essential 3'-terminal CCA sequence in tRNAs without using a nucleic acid template. Adds these three nucleotides in the order of C, C, and A to the tRNA nucleotide-73, using CTP and ATP as substrates and producing inorganic pyrophosphate. tRNA 3'-terminal CCA addition is required both for tRNA processing and repair. Also involved in tRNA surveillance by mediating tandem CCA addition to generate a CCACCA at the 3' terminus of unstable tRNAs. While stable tRNAs receive only 3'-terminal CCA, unstable tRNAs are marked with CCACCA and rapidly degraded. The polypeptide is CCA-adding enzyme (Ligilactobacillus salivarius (strain UCC118) (Lactobacillus salivarius)).